The chain runs to 262 residues: Nurim (262 aa).

Over 1 to 4 the chain is Nuclear; sequence MAPA. A helical transmembrane segment spans residues 5–28; that stretch reads LLLIPAALASFILAFGTGVEFVRF. Over 29 to 58 the chain is Perinuclear space; that stretch reads TSLRPLLGRISESGSPDARQGWLAALQDQS. Residues 59–80 traverse the membrane as a helical segment; that stretch reads ILVPLVWDLGLLLLFVGQHSLM. The Nuclear portion of the chain corresponds to 81-97; that stretch reads ATETVKEWMSRYFGVLQ. Residues 98–114 form a helical membrane-spanning segment; the sequence is RSLYVACTALALQLVMR. Topologically, residues 115 to 133 are perinuclear space; the sequence is YWEPVPRGPVLWETRTEPW. Residues 134 to 164 traverse the membrane as a helical segment; the sequence is ATWVPLLCFVLHVISWLLIFSILLVFDYAEL. Over 165–191 the chain is Nuclear; sequence MGLKQVYYHVLGLGEPLALKSPRALRL. Residues 192–210 form a helical membrane-spanning segment; it reads FSHLRHPVCVELLTVLWVV. Residues 211 to 216 are Perinuclear space-facing; that stretch reads PTLGTD. Residues 217-234 traverse the membrane as a helical segment; that stretch reads RLLLALLLTLYLGLAHGL. The Nuclear segment spans residues 235–262; it reads DQHDLRYLRAQLQRKLHLLSRPQDGEAE.

This sequence belongs to the nurim family.

Its subcellular location is the nucleus inner membrane. The polypeptide is Nurim (NRM) (Bos taurus (Bovine)).